We begin with the raw amino-acid sequence, 348 residues long: MTDLDLDWQLEELENGRLIPESNVVELCQRVRDILIEESNIQWISSPVTICGDIHGQLHDLLELFRIGGSCPGTKYLFLGDFVDRGFYSVETFLLLLTLKCKYPKEMTLIRGNHESRQITQVYGFYDECVRKYGSANVWRYCCEIFDYLSLGALVDGKVFCVHGGLSPSISSIDQIRLLDRKQEVPHEGAMCDLLWSDPEDISGWGLSPRGAGFLFGADVSEVFNRANDLSFIARAHQLVMEGYKIHFSDKDKQYPKFTNEEDSELDSDSASPVDDSPAPGDIITIPEKDKGSVVTVWSAPNYCYRCGNVASILQLDENQTQSFKIFGTASQERSGIPTKRPIADYFL.

Residues D53, H55, D81, and N113 each coordinate Mn(2+). H114 functions as the Proton donor in the catalytic mechanism. Residues H163 and H237 each coordinate Mn(2+). Residues 259 to 282 are disordered; sequence TNEEDSELDSDSASPVDDSPAPGD. A compositionally biased stretch (low complexity) spans 269–280; sequence DSASPVDDSPAP. Position 272 is a phosphoserine (S272). A Leucine methyl ester modification is found at L348.

The protein belongs to the PPP phosphatase family. PP-1 subfamily. Requires Mn(2+) as cofactor.

It is found in the cytoplasm. The protein resides in the nucleus. The enzyme catalyses O-phospho-L-seryl-[protein] + H2O = L-seryl-[protein] + phosphate. It catalyses the reaction O-phospho-L-threonyl-[protein] + H2O = L-threonyl-[protein] + phosphate. The sequence is that of Putative serine/threonine-protein phosphatase C26H8.05c from Schizosaccharomyces pombe (strain 972 / ATCC 24843) (Fission yeast).